The following is an 875-amino-acid chain: Alanine--tRNA ligase (875 aa).

4 residues coordinate Zn(2+): histidine 564, histidine 568, cysteine 666, and histidine 670.

Belongs to the class-II aminoacyl-tRNA synthetase family. As to quaternary structure, homotetramer. Requires Zn(2+) as cofactor.

The protein localises to the cytoplasm. It catalyses the reaction tRNA(Ala) + L-alanine + ATP = L-alanyl-tRNA(Ala) + AMP + diphosphate. Its function is as follows. Catalyzes the attachment of alanine to tRNA(Ala) in a two-step reaction: alanine is first activated by ATP to form Ala-AMP and then transferred to the acceptor end of tRNA(Ala). Also edits incorrectly charged Ser-tRNA(Ala) and Gly-tRNA(Ala) via its editing domain. The chain is Alanine--tRNA ligase from Yersinia pseudotuberculosis serotype O:1b (strain IP 31758).